A 382-amino-acid polypeptide reads, in one-letter code: Calcium/calmodulin-dependent protein kinase (382 aa).

In terms of domain architecture, Protein kinase spans 23 to 278 (YKFGRTLGAG…SKEALGHIWL (256 aa)). ATP contacts are provided by residues 29-37 (LGAGTYGVV) and Lys50. Asp142 acts as the Proton acceptor in catalysis. The segment at 291 to 301 (ELEAYRRRARL) is calmodulin-binding. 2 disordered regions span residues 318–344 (KEHE…GDGS) and 359–382 (QKQE…FSNA).

The protein belongs to the protein kinase superfamily. CAMK Ser/Thr protein kinase family. CaMK subfamily.

It carries out the reaction L-seryl-[protein] + ATP = O-phospho-L-seryl-[protein] + ADP + H(+). The catalysed reaction is L-threonyl-[protein] + ATP = O-phospho-L-threonyl-[protein] + ADP + H(+). This is Calcium/calmodulin-dependent protein kinase from Metarhizium anisopliae (Entomophthora anisopliae).